The following is a 181-amino-acid chain: Large ribosomal subunit protein uL5 (181 aa).

It belongs to the universal ribosomal protein uL5 family. As to quaternary structure, part of the 50S ribosomal subunit; part of the 5S rRNA/L5/L18/L25 subcomplex. Contacts the 5S rRNA and the P site tRNA. Forms a bridge to the 30S subunit in the 70S ribosome.

Its function is as follows. This is one of the proteins that bind and probably mediate the attachment of the 5S RNA into the large ribosomal subunit, where it forms part of the central protuberance. In the 70S ribosome it contacts protein S13 of the 30S subunit (bridge B1b), connecting the 2 subunits; this bridge is implicated in subunit movement. Contacts the P site tRNA; the 5S rRNA and some of its associated proteins might help stabilize positioning of ribosome-bound tRNAs. This Rickettsia canadensis (strain McKiel) protein is Large ribosomal subunit protein uL5.